Consider the following 412-residue polypeptide: Glucose/galactose transporter (412 aa).

Transmembrane regions (helical) follow at residues 21-41 (YGFA…ITCL), 62-82 (LIQF…GQLV), 90-110 (GIVV…PAAS), 113-133 (VYAL…ILQV), 158-178 (FNSL…LSAA), 192-212 (FPYL…AILK), 239-259 (LGAI…SFLV), 310-330 (AFVA…IAMW), 331-351 (SVLA…SLAL), 363-383 (GILC…GALA), and 388-408 (IHLA…YGLI).

The protein belongs to the major facilitator superfamily. FHS transporter (TC 2.A.1.7) family.

The protein localises to the cell inner membrane. Its function is as follows. Intake of glucose and galactose. In Brucella abortus (strain 2308), this protein is Glucose/galactose transporter (gluP).